The primary structure comprises 179 residues: Large ribosomal subunit protein uL5 (179 aa).

The protein belongs to the universal ribosomal protein uL5 family. In terms of assembly, part of the 50S ribosomal subunit; part of the 5S rRNA/L5/L18/L25 subcomplex. Contacts the 5S rRNA and the P site tRNA. Forms a bridge to the 30S subunit in the 70S ribosome.

This is one of the proteins that bind and probably mediate the attachment of the 5S RNA into the large ribosomal subunit, where it forms part of the central protuberance. In the 70S ribosome it contacts protein S13 of the 30S subunit (bridge B1b), connecting the 2 subunits; this bridge is implicated in subunit movement. Contacts the P site tRNA; the 5S rRNA and some of its associated proteins might help stabilize positioning of ribosome-bound tRNAs. The chain is Large ribosomal subunit protein uL5 from Cronobacter sakazakii (strain ATCC BAA-894) (Enterobacter sakazakii).